Reading from the N-terminus, the 1337-residue chain is uncharacterized protein (1337 aa).

Disordered stretches follow at residues 1–94 (MPTS…QSSA) and 119–174 (ARDI…PSFF). Composition is skewed to low complexity over residues 18–37 (SNTSSTESSSSNNSSTASGS) and 68–79 (SSTHFQSSHSVS). Over residues 80–94 (NAHNQSPLNQSQSSA) the composition is skewed to polar residues. Residues 123–147 (PQQPSHSQNPSSSSSSSSSQSSQHS) show a composition bias toward low complexity. Residues 157–167 (NEKKSLDDPSP) are compositionally biased toward basic and acidic residues. The next 6 helical transmembrane spans lie at 209 to 229 (GLKPVIRAAINSWIAFLLVLA), 241 to 261 (FFVVITSILVPAMEPIAPMLW), 267 to 287 (FLLLFSAYAWTVLAAKLATVA), 328 to 348 (VRPLPSIIWALFEFSAVALFI), 361 to 381 (CVFSIICTAVSANMGPMYPYF), and 387 to 407 (LFFIVPNCVQTGITIGCTLFI). 2 disordered regions span residues 623 to 662 (SHVRTGSNNSEAPLAAKTSTTKRNGDLLEPQSPSLRSHKS) and 868 to 894 (YDENIHNDVDKDMNQSSTQPRDPDADH). The segment covering 626-644 (RTGSNNSEAPLAAKTSTTK) has biased composition (polar residues). Residues 868–880 (YDENIHNDVDKDM) show a composition bias toward basic and acidic residues. 6 consecutive transmembrane segments (helical) span residues 917 to 937 (MNVFVLKVGTLAVICTIPAFC), 975 to 995 (IFGTFFGAILGMVIWYTGSGH), 997 to 1017 (LGNAYGLAAVWGAAIPFIQFI), 1021 to 1041 (FVILTPMPAVIFCVTAALTVT), 1066 to 1086 (FLTVAAGITVAFIFSFLPQPR), and 1275 to 1295 (FAVGCTIAYAVVNHIDRIMFI).

It localises to the membrane. This is an uncharacterized protein from Schizosaccharomyces pombe (strain 972 / ATCC 24843) (Fission yeast).